The chain runs to 427 residues: tRNA(Ile)-lysidine synthase (427 aa).

21–26 (SGGADS) serves as a coordination point for ATP.

This sequence belongs to the tRNA(Ile)-lysidine synthase family.

It is found in the cytoplasm. The catalysed reaction is cytidine(34) in tRNA(Ile2) + L-lysine + ATP = lysidine(34) in tRNA(Ile2) + AMP + diphosphate + H(+). Its function is as follows. Ligates lysine onto the cytidine present at position 34 of the AUA codon-specific tRNA(Ile) that contains the anticodon CAU, in an ATP-dependent manner. Cytidine is converted to lysidine, thus changing the amino acid specificity of the tRNA from methionine to isoleucine. This is tRNA(Ile)-lysidine synthase from Actinobacillus succinogenes (strain ATCC 55618 / DSM 22257 / CCUG 43843 / 130Z).